The primary structure comprises 168 residues: SsrA-binding protein (168 aa).

Positions 1–20 are disordered; that stretch reads MAAQSKQAKPSGKQGGKKII.

This sequence belongs to the SmpB family.

It is found in the cytoplasm. Required for rescue of stalled ribosomes mediated by trans-translation. Binds to transfer-messenger RNA (tmRNA), required for stable association of tmRNA with ribosomes. tmRNA and SmpB together mimic tRNA shape, replacing the anticodon stem-loop with SmpB. tmRNA is encoded by the ssrA gene; the 2 termini fold to resemble tRNA(Ala) and it encodes a 'tag peptide', a short internal open reading frame. During trans-translation Ala-aminoacylated tmRNA acts like a tRNA, entering the A-site of stalled ribosomes, displacing the stalled mRNA. The ribosome then switches to translate the ORF on the tmRNA; the nascent peptide is terminated with the 'tag peptide' encoded by the tmRNA and targeted for degradation. The ribosome is freed to recommence translation, which seems to be the essential function of trans-translation. This Mycobacterium ulcerans (strain Agy99) protein is SsrA-binding protein.